Reading from the N-terminus, the 442-residue chain is Probable glycine dehydrogenase (decarboxylating) subunit 1 (442 aa).

This sequence belongs to the GcvP family. N-terminal subunit subfamily. In terms of assembly, the glycine cleavage system is composed of four proteins: P, T, L and H. In this organism, the P 'protein' is a heterodimer of two subunits.

It carries out the reaction N(6)-[(R)-lipoyl]-L-lysyl-[glycine-cleavage complex H protein] + glycine + H(+) = N(6)-[(R)-S(8)-aminomethyldihydrolipoyl]-L-lysyl-[glycine-cleavage complex H protein] + CO2. Functionally, the glycine cleavage system catalyzes the degradation of glycine. The P protein binds the alpha-amino group of glycine through its pyridoxal phosphate cofactor; CO(2) is released and the remaining methylamine moiety is then transferred to the lipoamide cofactor of the H protein. The chain is Probable glycine dehydrogenase (decarboxylating) subunit 1 from Geotalea daltonii (strain DSM 22248 / JCM 15807 / FRC-32) (Geobacter daltonii).